Here is a 215-residue protein sequence, read N- to C-terminus: Adenylate kinase (215 aa).

Position 10–15 (10–15 (GAGKGT)) interacts with ATP. The NMP stretch occupies residues 30–58 (STGDMLREAKRSGTLEKRYLDIMDSGGLL). Residues T31, R36, 56-58 (GLL), 84-87 (GFPR), and Q91 contribute to the AMP site. Residues 128–158 (HRRTDKRSGQIYHLVYNPPPPGAELEHRADD) form an LID region. ATP is bound by residues R129 and 138–139 (IY). R155 and R166 together coordinate AMP. G194 lines the ATP pocket.

Belongs to the adenylate kinase family. As to quaternary structure, monomer.

The protein resides in the cytoplasm. The catalysed reaction is AMP + ATP = 2 ADP. It participates in purine metabolism; AMP biosynthesis via salvage pathway; AMP from ADP: step 1/1. Its function is as follows. Catalyzes the reversible transfer of the terminal phosphate group between ATP and AMP. Plays an important role in cellular energy homeostasis and in adenine nucleotide metabolism. This Sorangium cellulosum (strain So ce56) (Polyangium cellulosum (strain So ce56)) protein is Adenylate kinase.